The following is a 466-amino-acid chain: 3-isopropylmalate dehydratase large subunit (466 aa).

The [4Fe-4S] cluster site is built by C347, C407, and C410.

The protein belongs to the aconitase/IPM isomerase family. LeuC type 1 subfamily. Heterodimer of LeuC and LeuD. It depends on [4Fe-4S] cluster as a cofactor.

The enzyme catalyses (2R,3S)-3-isopropylmalate = (2S)-2-isopropylmalate. The protein operates within amino-acid biosynthesis; L-leucine biosynthesis; L-leucine from 3-methyl-2-oxobutanoate: step 2/4. Catalyzes the isomerization between 2-isopropylmalate and 3-isopropylmalate, via the formation of 2-isopropylmaleate. In Shigella boydii serotype 4 (strain Sb227), this protein is 3-isopropylmalate dehydratase large subunit.